Here is a 389-residue protein sequence, read N- to C-terminus: Chalcone synthase 6 (389 aa).

Residue C164 is part of the active site.

It belongs to the thiolase-like superfamily. Chalcone/stilbene synthases family.

It catalyses the reaction (E)-4-coumaroyl-CoA + 3 malonyl-CoA + 3 H(+) = 2',4,4',6'-tetrahydroxychalcone + 3 CO2 + 4 CoA. Its pathway is secondary metabolite biosynthesis; flavonoid biosynthesis. The primary product of this enzyme is 4,2',4',6'-tetrahydroxychalcone (also termed naringenin-chalcone or chalcone) which can under specific conditions spontaneously isomerize into naringenin. This chain is Chalcone synthase 6 (CHS6), found in Pisum sativum (Garden pea).